The sequence spans 135 residues: Snaclec echicetin subunit alpha (135 aa).

Residues 1-4 (GADE) form the signal peptide. Intrachain disulfides connect cysteine 6–cysteine 17, cysteine 34–cysteine 129, and cysteine 104–cysteine 121. Residues 13 to 130 (NGVYCYMLFK…CENTFPFMCK (118 aa)) enclose the C-type lectin domain.

Belongs to the snaclec family. Heterodimer of subunits alpha and beta; disulfide-linked. As to expression, expressed by the venom gland.

It localises to the secreted. Binding of echicetin to GPIbalpha (GP1BA) receptor on platelets alone results in inhibition of platelet aggregation, while binding to both GP1BA receptor and IgMk promotes platelet aggregation and signal transduction. In Echis carinatus (Saw-scaled viper), this protein is Snaclec echicetin subunit alpha.